Here is a 155-residue protein sequence, read N- to C-terminus: S-ribosylhomocysteine lyase (155 aa).

Fe cation is bound by residues H57, H61, and C124.

It belongs to the LuxS family. In terms of assembly, homodimer. Fe cation is required as a cofactor.

The enzyme catalyses S-(5-deoxy-D-ribos-5-yl)-L-homocysteine = (S)-4,5-dihydroxypentane-2,3-dione + L-homocysteine. In terms of biological role, involved in the synthesis of autoinducer 2 (AI-2) which is secreted by bacteria and is used to communicate both the cell density and the metabolic potential of the environment. The regulation of gene expression in response to changes in cell density is called quorum sensing. Catalyzes the transformation of S-ribosylhomocysteine (RHC) to homocysteine (HC) and 4,5-dihydroxy-2,3-pentadione (DPD). This Listeria monocytogenes serotype 4b (strain CLIP80459) protein is S-ribosylhomocysteine lyase.